A 268-amino-acid chain; its full sequence is E3 ubiquitin-protein ligase IAP-3 (268 aa).

BIR repeat units lie at residues lysine 18–valine 84 and glutamate 111–valine 178. Residues cysteine 148, cysteine 151, histidine 168, and cysteine 175 each contribute to the Zn(2+) site. The RING-type zinc finger occupies cysteine 221–arginine 256.

This sequence belongs to the IAP family. Post-translationally, auto-ubiquitinated.

It catalyses the reaction S-ubiquitinyl-[E2 ubiquitin-conjugating enzyme]-L-cysteine + [acceptor protein]-L-lysine = [E2 ubiquitin-conjugating enzyme]-L-cysteine + N(6)-ubiquitinyl-[acceptor protein]-L-lysine.. Functionally, RING-finger E3 ubiquitin ligase required to prevent cellular apoptosis in infected cells. Ubiquitinates and subsequently targets host pro-apoptotic cellular proteins such as HID for degradation by the proteasome. This Orgyia pseudotsugata multicapsid polyhedrosis virus (OpMNPV) protein is E3 ubiquitin-protein ligase IAP-3 (IAP3).